The sequence spans 792 residues: Kinesin-related protein 2 (792 aa).

Disordered stretches follow at residues 22–50 (TINS…PPST) and 162–183 (NNIN…SPVQ). Residues 34–50 (ASSSSQSNDRISYPPST) are compositionally biased toward polar residues. Residues 284–423 (RLSLSIQDIK…LEKSRSDEKV (140 aa)) adopt a coiled-coil conformation. Positions 437–781 (NIRVFCRIRP…LRFAAKVNSC (345 aa)) constitute a Kinesin motor domain. ATP is bound at residue 528–535 (GQTGSGKT).

The protein belongs to the TRAFAC class myosin-kinesin ATPase superfamily. Kinesin family. NCD subfamily.

Its subcellular location is the nucleus. It localises to the cytoplasm. It is found in the cytoskeleton. The protein localises to the spindle. Microtubule-dependent motor that is probably involved in microtubule organization in the mitotic spindle. The chain is Kinesin-related protein 2 (kif2) from Dictyostelium discoideum (Social amoeba).